The sequence spans 263 residues: Ribonuclease HII (263 aa).

In terms of domain architecture, RNase H type-2 spans 71–262 (QAIAGIDEVG…VKSMCCDSTN (192 aa)). A divalent metal cation-binding residues include Asp-77, Glu-78, and Asp-172.

It belongs to the RNase HII family. Mn(2+) is required as a cofactor. Mg(2+) serves as cofactor.

The protein localises to the cytoplasm. The enzyme catalyses Endonucleolytic cleavage to 5'-phosphomonoester.. In terms of biological role, endonuclease that specifically degrades the RNA of RNA-DNA hybrids. This chain is Ribonuclease HII, found in Streptococcus pyogenes serotype M3 (strain ATCC BAA-595 / MGAS315).